Reading from the N-terminus, the 590-residue chain is UvrABC system protein C (590 aa).

The GIY-YIG domain occupies 15–92 (DLPGCYMMKD…IQKHKPYYNI (78 aa)). The 36-residue stretch at 197-232 (SKIKKELEQKMETASENLEFERAAEIRDQIHYVEMT) folds into the UVR domain.

It belongs to the UvrC family. As to quaternary structure, interacts with UvrB in an incision complex.

It localises to the cytoplasm. Its function is as follows. The UvrABC repair system catalyzes the recognition and processing of DNA lesions. UvrC both incises the 5' and 3' sides of the lesion. The N-terminal half is responsible for the 3' incision and the C-terminal half is responsible for the 5' incision. In Ligilactobacillus salivarius (strain UCC118) (Lactobacillus salivarius), this protein is UvrABC system protein C.